We begin with the raw amino-acid sequence, 393 residues long: Chorismate synthase (393 aa).

NADP(+) contacts are provided by Arg40 and Arg46. FMN is bound by residues 129 to 131 (RSS), 249 to 250 (QA), Gly301, 316 to 320 (KPIPT), and Arg342.

It belongs to the chorismate synthase family. Homotetramer. Requires FMNH2 as cofactor.

The enzyme catalyses 5-O-(1-carboxyvinyl)-3-phosphoshikimate = chorismate + phosphate. Its pathway is metabolic intermediate biosynthesis; chorismate biosynthesis; chorismate from D-erythrose 4-phosphate and phosphoenolpyruvate: step 7/7. Its function is as follows. Catalyzes the anti-1,4-elimination of the C-3 phosphate and the C-6 proR hydrogen from 5-enolpyruvylshikimate-3-phosphate (EPSP) to yield chorismate, which is the branch point compound that serves as the starting substrate for the three terminal pathways of aromatic amino acid biosynthesis. This reaction introduces a second double bond into the aromatic ring system. This is Chorismate synthase from Geobacter sulfurreducens (strain ATCC 51573 / DSM 12127 / PCA).